We begin with the raw amino-acid sequence, 228 residues long: Urease accessory protein UreE (228 aa).

The disordered stretch occupies residues 188–228; the sequence is PLDEPHGSGLHIHAIHSHGDGHSHDHDHSHSHGDHDHDHKH. Residues 204–228 are compositionally biased toward basic and acidic residues; the sequence is SHGDGHSHDHDHSHSHGDHDHDHKH.

This sequence belongs to the UreE family.

The protein resides in the cytoplasm. Its function is as follows. Involved in urease metallocenter assembly. Binds nickel. Probably functions as a nickel donor during metallocenter assembly. The polypeptide is Urease accessory protein UreE (Yersinia kristensenii).